Reading from the N-terminus, the 94-residue chain is MTKSELIERLAGQQSHIPAKVVEDAVKEMLEQMASTLAEGDRIEIRGFGSFSLHYRAPRVGRNPKTGDKVELEGKYVPHFKPGKELRDRANIYG.

The protein belongs to the bacterial histone-like protein family. As to quaternary structure, heterodimer of an alpha and a beta chain.

Functionally, this protein is one of the two subunits of integration host factor, a specific DNA-binding protein that functions in genetic recombination as well as in transcriptional and translational control. This chain is Integration host factor subunit beta, found in Pectobacterium atrosepticum (strain SCRI 1043 / ATCC BAA-672) (Erwinia carotovora subsp. atroseptica).